A 447-amino-acid chain; its full sequence is UDP-glucosyl transferase 79T1 (447 aa).

His-18 (proton acceptor) is an active-site residue. Catalysis depends on Asp-116, which acts as the Charge relay. The UDP site is built by Ser-265, Trp-323, Val-324, His-341, Thr-346, and Glu-349.

It belongs to the UDP-glycosyltransferase family. In terms of tissue distribution, mainly expressed in flowers, flower buds and young leaves, and, to a lesser extent, in old leaves, stems and roots.

Its pathway is secondary metabolite biosynthesis; terpenoid biosynthesis. In terms of biological role, component of the oleanane-type triterpene saponins (e.g. saponarioside A and saponarioside B) biosynthetic pathway, leading to the production of natural products with detergent properties used as traditional sources of soap. A glycosyltransferase that mediates the conversion of QA-triF to QA-triFR via the elongation of the C-28 sugar chain with a deoxyhexose on the D-fucose moiety. The sequence is that of UDP-glucosyl transferase 79T1 from Saponaria officinalis (Common soapwort).